The following is a 320-amino-acid chain: Acetyl-coenzyme A carboxylase carboxyl transferase subunit beta (320 aa).

Residues 25 to 294 (LWRKCPECGT…AIVGDLPAPD (270 aa)) enclose the CoA carboxyltransferase N-terminal domain. Residues C29, C32, C48, and C51 each coordinate Zn(2+). Residues 29–51 (CPECGTMLFHRELSDNLFVCISC) form a C4-type zinc finger. The segment at 290-320 (LPAPDPAPATPEPQKAAPSAPAQDKPGAGRS) is disordered.

The protein belongs to the AccD/PCCB family. As to quaternary structure, acetyl-CoA carboxylase is a heterohexamer composed of biotin carboxyl carrier protein (AccB), biotin carboxylase (AccC) and two subunits each of ACCase subunit alpha (AccA) and ACCase subunit beta (AccD). The cofactor is Zn(2+).

The protein resides in the cytoplasm. The catalysed reaction is N(6)-carboxybiotinyl-L-lysyl-[protein] + acetyl-CoA = N(6)-biotinyl-L-lysyl-[protein] + malonyl-CoA. Its pathway is lipid metabolism; malonyl-CoA biosynthesis; malonyl-CoA from acetyl-CoA: step 1/1. Functionally, component of the acetyl coenzyme A carboxylase (ACC) complex. Biotin carboxylase (BC) catalyzes the carboxylation of biotin on its carrier protein (BCCP) and then the CO(2) group is transferred by the transcarboxylase to acetyl-CoA to form malonyl-CoA. The polypeptide is Acetyl-coenzyme A carboxylase carboxyl transferase subunit beta (Dinoroseobacter shibae (strain DSM 16493 / NCIMB 14021 / DFL 12)).